Reading from the N-terminus, the 205-residue chain is LIM domain-containing protein PLIM2b (205 aa).

LIM zinc-binding domains are found at residues aspartate 8–glutamate 68 and aspartate 102–glutamate 162. The segment at arginine 177–serine 205 is disordered. Positions valine 194 to serine 205 are enriched in basic and acidic residues.

In terms of assembly, interacts with F-actin. As to expression, predominantly expressed in flowers and in pollen grains. Detected in vasculature and roots.

The protein localises to the cytoplasm. It is found in the cytoskeleton. Functionally, binds to actin filaments and promotes cross-linking into thick bundles. Has an actin-stabilizing activity. The actin regulatory activities are inhibited by pH &gt; 6.8 but are [Ca(2+)] independent. The chain is LIM domain-containing protein PLIM2b from Arabidopsis thaliana (Mouse-ear cress).